The primary structure comprises 632 residues: Thioredoxin domain-containing protein C959.05c (632 aa).

An N-terminal signal peptide occupies residues 1–22 (MKLFLYHFTFIVYYFIISFSYA). 3 N-linked (GlcNAc...) asparagine glycosylation sites follow: Asn-35, Asn-41, and Asn-140. The Thioredoxin domain occupies 153-284 (SDSSSTDPAF…LLSYSNQVAS (132 aa)). Cys-209 and Cys-212 are oxidised to a cystine. N-linked (GlcNAc...) asparagine glycosylation is present at Asn-557. Residues 583 to 603 (LIVFNLLIALLILSILTIISA) traverse the membrane as a helical segment.

It belongs to the protein disulfide isomerase family.

Its subcellular location is the endoplasmic reticulum membrane. It carries out the reaction Catalyzes the rearrangement of -S-S- bonds in proteins.. In terms of biological role, acts as a membrane-bound chaperone in endoplasmic reticulum quality control. Probably facilitates presentation of substrate to membrane-bound components of the degradation machinery. This Schizosaccharomyces pombe (strain 972 / ATCC 24843) (Fission yeast) protein is Thioredoxin domain-containing protein C959.05c.